A 68-amino-acid chain; its full sequence is Large ribosomal subunit protein uL29 (68 aa).

Belongs to the universal ribosomal protein uL29 family.

The protein is Large ribosomal subunit protein uL29 of Rhodopseudomonas palustris (strain BisA53).